The chain runs to 707 residues: Elongation factor G (707 aa).

In terms of domain architecture, tr-type G spans 8-294 (ERYRNFGIIA…GVVDYLPSPL (287 aa)). Residues 17 to 24 (AHIDAGKT), 92 to 96 (DTPGH), and 146 to 149 (NKMD) each bind GTP.

Belongs to the TRAFAC class translation factor GTPase superfamily. Classic translation factor GTPase family. EF-G/EF-2 subfamily.

The protein localises to the cytoplasm. Functionally, catalyzes the GTP-dependent ribosomal translocation step during translation elongation. During this step, the ribosome changes from the pre-translocational (PRE) to the post-translocational (POST) state as the newly formed A-site-bound peptidyl-tRNA and P-site-bound deacylated tRNA move to the P and E sites, respectively. Catalyzes the coordinated movement of the two tRNA molecules, the mRNA and conformational changes in the ribosome. The polypeptide is Elongation factor G (Hyphomonas neptunium (strain ATCC 15444)).